We begin with the raw amino-acid sequence, 155 residues long: Small ribosomal subunit protein uS15 (155 aa).

Residues M1–G10 show a composition bias toward basic residues. A disordered region spans residues M1–D66. Over residues E21 to I33 the composition is skewed to acidic residues. A compositionally biased stretch (basic and acidic residues) spans E34–H45.

The protein belongs to the universal ribosomal protein uS15 family. Part of the 30S ribosomal subunit.

The polypeptide is Small ribosomal subunit protein uS15 (Halobacterium salinarum (strain ATCC 700922 / JCM 11081 / NRC-1) (Halobacterium halobium)).